Consider the following 642-residue polypeptide: Influenza virus NS1A-binding protein (642 aa).

The BTB domain occupies 1–131; sequence MIPNGYLMFE…GDYLLSRMDV (131 aa). The BACK domain maps to 132-350; sequence TSCISYRNFA…MQQDELIEKP (219 aa). The sufficient for AHR interaction and signaling stretch occupies residues 164-368; it reads ISEEEEFLKL…SGLGTAEMNG (205 aa). Phosphoserine occurs at positions 246, 277, 322, 336, and 338. The segment at 257–281 is disordered; the sequence is KPPRENGHKQISSSSTGCLSSPNAT. Residues 265–281 are compositionally biased toward polar residues; that stretch reads KQISSSSTGCLSSPNAT. 6 Kelch repeats span residues 384–421, 432–469, 481–518, 527–565, 575–612, and 622–642; these read TVECYNPHTDHWSFLAPMRTPRARFQMAVLMGQLYVVG, CGEMYDSNIDDWIPVPELRTNRCNAGVCALNGKLYIVG, NCDVFDPVTKLWTSCAPLNIRRHQSAVCELGGYLYIIG, NTVERYNPENNTWTLIAPMNVARRGAGVAVLNGKLFVCG, CVEMYDPTRNEWKMMGNMTSPRSNAGIATVGNTIYAVG, and TVEVYNLESNEWSPYTKIFQF.

It belongs to the BTB-kelch protein family. In terms of assembly, homodimer; through the BTB domain. Interacts with AHR/Aryl hydrocarbon receptor. Interacts (via BACK domain) with pre-mRNA-binding protein HNRNPK; the interaction is direct. Interacts (via BACK domain) with splicing factor PTBP1; the interaction is direct. Interacts (via Kelch repeats) with RNA polymerase POLR2A (via C-terminal domain). Interacts (via BACK domain) with splicing factor SNRPA; the interaction is indirect. Interacts (via Kelch repeats) with splicing factor SART1. Interacts (via BACK domain) with ALYREF; the interaction is indirect and likely plays a role in mRNA nuclear export. Interacts (via Kelch repeats) with KLHL20 (via Kelch repeats); this interaction blocks the assembly of Cul3-KLHL20 complex. (Microbial infection) Interacts (via BACK domain) with influenza A virus non-structural protein 1 (NS1); the interaction is direct and bridges the interaction between NS1 and HNRNPK.

It is found in the cytoplasm. The protein localises to the cytoskeleton. The protein resides in the nucleus. Its subcellular location is the nucleoplasm. Its function is as follows. Involved in many cell functions, including pre-mRNA splicing, the aryl hydrocarbon receptor (AHR) pathway, F-actin organization and protein ubiquitination. Plays a role in the dynamic organization of the actin skeleton as a stabilizer of actin filaments by association with F-actin through Kelch repeats. Protects cells from cell death induced by actin destabilization. Functions as modifier of the AHR/Aryl hydrocarbon receptor pathway increasing the concentration of AHR available to activate transcription. In addition, functions as a negative regulator of BCR(KLHL20) E3 ubiquitin ligase complex to prevent ubiquitin-mediated proteolysis of PML and DAPK1, two tumor suppressors. Inhibits pre-mRNA splicing (in vitro). May play a role in mRNA nuclear export. In terms of biological role, (Microbial infection) Involved in the alternative splicing of influenza A virus M1 mRNA through interaction with HNRNPK, thereby facilitating the generation of viral M2 protein. The BTB and Kelch domains are required for splicing activity. Promotes export of viral M mRNA and RNP via its interaction with mRNA export factor ALYREF. The polypeptide is Influenza virus NS1A-binding protein (Homo sapiens (Human)).